The following is a 232-amino-acid chain: Ion-translocating oxidoreductase complex subunit E (232 aa).

6 consecutive transmembrane segments (helical) span residues 18-38 (GLVQ…LTNA), 39-59 (LGLG…VSLV), 69-89 (IPVF…LINA), 93-113 (GLYL…IIIG), 127-147 (AAFD…VLGA), and 182-202 (PFLL…LIAL).

The protein belongs to the NqrDE/RnfAE family. As to quaternary structure, the complex is composed of six subunits: RnfA, RnfB, RnfC, RnfD, RnfE and RnfG.

The protein localises to the cell inner membrane. Part of a membrane-bound complex that couples electron transfer with translocation of ions across the membrane. The polypeptide is Ion-translocating oxidoreductase complex subunit E (Shewanella sp. (strain ANA-3)).